The primary structure comprises 505 residues: Metalloprotease TIKI1 (505 aa).

An N-terminal signal peptide occupies residues 1–19; the sequence is MSPWSWFLLQTLCLLPTGA. Topologically, residues 20 to 477 are extracellular; sequence ASRRGAPGTA…RRGHSHHSQM (458 aa). N-linked (GlcNAc...) asparagine glycosylation is found at Asn220, Asn229, Asn278, and Asn336. Residues 389–428 form a disordered region; the sequence is PEAVSSGHSTLPPLVSRPGSADTPSEAEQRFRKKRRRSQR. Residues 419-428 show a composition bias toward basic residues; that stretch reads FRKKRRRSQR. A helical membrane pass occupies residues 478 to 498; the sequence is VASSACLSLWTPVFWVLVLAF. Residues 499–505 are Cytoplasmic-facing; sequence QTETPLL.

Belongs to the TIKI family. Mn(2+) is required as a cofactor. The cofactor is Co(2+).

Its subcellular location is the cell membrane. Metalloprotease that acts as a negative regulator of the Wnt signaling pathway by mediating the cleavage of the 8 N-terminal residues of a subset of Wnt proteins. Following cleavage, Wnt proteins become oxidized and form large disulfide-bond oligomers, leading to their inactivation. Able to cleave WNT3A, WNT5, but not WNT11. Required for head formation. In Homo sapiens (Human), this protein is Metalloprotease TIKI1 (TRABD2A).